Reading from the N-terminus, the 1598-residue chain is Pentafunctional AROM polypeptide (1598 aa).

The interval 1-384 is 3-dehydroquinate synthase; that stretch reads MGVPTKISIL…YEPRASTVSN (384 aa). Residues 44 to 46, 81 to 84, 114 to 116, and D119 each bind NAD(+); these read DTN, ESSK, and GGV. A 7-phospho-2-dehydro-3-deoxy-D-arabino-heptonate-binding site is contributed by R130. Residue 139–140 coordinates NAD(+); it reads TT. 7-phospho-2-dehydro-3-deoxy-D-arabino-heptonate-binding residues include D146 and K152. NAD(+) is bound at residue K161. N162 contacts 7-phospho-2-dehydro-3-deoxy-D-arabino-heptonate. Residues 179-182 and N190 each bind NAD(+); that span reads FLNT. A Zn(2+)-binding site is contributed by E194. Residues 194–197 and K250 each bind 7-phospho-2-dehydro-3-deoxy-D-arabino-heptonate; that span reads EVIK. Residue E260 is the Proton acceptor; for 3-dehydroquinate synthase activity of the active site. 7-phospho-2-dehydro-3-deoxy-D-arabino-heptonate-binding positions include 264 to 268 and H271; that span reads RNLLN. Residue H271 coordinates Zn(2+). H275 acts as the Proton acceptor; for 3-dehydroquinate synthase activity in catalysis. 7-phospho-2-dehydro-3-deoxy-D-arabino-heptonate is bound by residues H287 and K356. Residue H287 participates in Zn(2+) binding. The segment at 397 to 842 is EPSP synthase; sequence VYPGFPKSLN…WNTLAQTFKV (446 aa). The active-site For EPSP synthase activity is C824. The shikimate kinase stretch occupies residues 867 to 1059; that stretch reads AASIFIIGMR…RRKENTFFVS (193 aa). 874-881 is an ATP binding site; sequence GMRGAGKT. The tract at residues 1060–1280 is 3-dehydroquinase; the sequence is LTFPDLTPAS…AAPGQLSARE (221 aa). H1183 (proton acceptor; for 3-dehydroquinate dehydratase activity) is an active-site residue. The Schiff-base intermediate with substrate; for 3-dehydroquinate dehydratase activity role is filled by K1211. The shikimate dehydrogenase stretch occupies residues 1293–1598; it reads AKKFAVIGKP…GVSSSDDTIS (306 aa).

In the N-terminal section; belongs to the sugar phosphate cyclases superfamily. Dehydroquinate synthase family. It in the 2nd section; belongs to the EPSP synthase family. This sequence in the 3rd section; belongs to the shikimate kinase family. The protein in the 4th section; belongs to the type-I 3-dehydroquinase family. In the C-terminal section; belongs to the shikimate dehydrogenase family. In terms of assembly, homodimer. Zn(2+) serves as cofactor.

It is found in the cytoplasm. The catalysed reaction is 7-phospho-2-dehydro-3-deoxy-D-arabino-heptonate = 3-dehydroquinate + phosphate. It catalyses the reaction 3-dehydroquinate = 3-dehydroshikimate + H2O. The enzyme catalyses shikimate + NADP(+) = 3-dehydroshikimate + NADPH + H(+). It carries out the reaction shikimate + ATP = 3-phosphoshikimate + ADP + H(+). The catalysed reaction is 3-phosphoshikimate + phosphoenolpyruvate = 5-O-(1-carboxyvinyl)-3-phosphoshikimate + phosphate. It functions in the pathway metabolic intermediate biosynthesis; chorismate biosynthesis; chorismate from D-erythrose 4-phosphate and phosphoenolpyruvate: step 2/7. Its pathway is metabolic intermediate biosynthesis; chorismate biosynthesis; chorismate from D-erythrose 4-phosphate and phosphoenolpyruvate: step 3/7. It participates in metabolic intermediate biosynthesis; chorismate biosynthesis; chorismate from D-erythrose 4-phosphate and phosphoenolpyruvate: step 4/7. The protein operates within metabolic intermediate biosynthesis; chorismate biosynthesis; chorismate from D-erythrose 4-phosphate and phosphoenolpyruvate: step 5/7. It functions in the pathway metabolic intermediate biosynthesis; chorismate biosynthesis; chorismate from D-erythrose 4-phosphate and phosphoenolpyruvate: step 6/7. In terms of biological role, the AROM polypeptide catalyzes 5 consecutive enzymatic reactions in prechorismate polyaromatic amino acid biosynthesis. This Paracoccidioides brasiliensis (strain Pb18) protein is Pentafunctional AROM polypeptide.